Consider the following 319-residue polypeptide: Capsid protein (319 aa).

The protein localises to the virion. Its function is as follows. The capsid protein self-assembles to form an icosahedral capsid with a T=2 symmetry made of 120 subunits. The protein is Capsid protein of Cryptosporidium parvum virus 1 (strain KSU-1).